The following is a 721-amino-acid chain: Polyribonucleotide nucleotidyltransferase (721 aa).

Residues Asp-495 and Asp-501 each coordinate Mg(2+). Positions 562 to 621 constitute a KH domain; that stretch reads PRLLSFRIDPELIGTVIGPGGRTIKNITERTNTKIDIEDSGIVTIASHDGAAAEEAQKII. Residues 631 to 699 enclose the S1 motif domain; the sequence is GEVFTGSITR…NRGRINLTLR (69 aa). The segment at 700–721 is disordered; sequence GVPQSGESADSQPAPTPVAPLS.

The protein belongs to the polyribonucleotide nucleotidyltransferase family. The cofactor is Mg(2+).

Its subcellular location is the cytoplasm. It catalyses the reaction RNA(n+1) + phosphate = RNA(n) + a ribonucleoside 5'-diphosphate. Involved in mRNA degradation. Catalyzes the phosphorolysis of single-stranded polyribonucleotides processively in the 3'- to 5'-direction. The chain is Polyribonucleotide nucleotidyltransferase from Synechococcus sp. (strain CC9311).